The sequence spans 318 residues: NADH-ubiquinone oxidoreductase chain 1 (318 aa).

8 helical membrane passes run 2–22 (PMANLLLLIVPILIAMAFLML), 68–88 (ITLYITAPTLALTIALLLWTP), 100–120 (LGLLFILATSSLAVYSILWSG), 146–166 (LAIILLSTLLMSGSFNLSTLI), 171–191 (HLWLLLPSWPLAMMWFISTLA), 231–251 (IIMMNTLTTTIFLGTTYDALS), 253–273 (ELYTTYFVTKTLLLTSLFLWI), and 294–314 (LPLTLALLMWYVSMPITISSI).

This sequence belongs to the complex I subunit 1 family. Core subunit of respiratory chain NADH dehydrogenase (Complex I) which is composed of 45 different subunits.

It localises to the mitochondrion inner membrane. It catalyses the reaction a ubiquinone + NADH + 5 H(+)(in) = a ubiquinol + NAD(+) + 4 H(+)(out). Functionally, core subunit of the mitochondrial membrane respiratory chain NADH dehydrogenase (Complex I) which catalyzes electron transfer from NADH through the respiratory chain, using ubiquinone as an electron acceptor. Essential for the catalytic activity and assembly of complex I. This is NADH-ubiquinone oxidoreductase chain 1 (MT-ND1) from Homo sapiens (Human).